The chain runs to 773 residues: Ergothioneine biosynthesis protein 1 (773 aa).

The interval 16 to 322 is L-histidine N(alpha)-methyltransferase; it reads PESIEQSLKR…ESTIADYSTY (307 aa). Tyr-51 serves as a coordination point for L-histidine. Residues Gly-85, Lys-91, Asp-112, and 142–143 contribute to the S-adenosyl-L-methionine site; that span reads CF. L-histidine contacts are provided by residues Asn-172, Tyr-212, and 287 to 289; that span reads EES. Positions 347–772 are hercynylcysteine S-oxide synthase; that stretch reads ALRKVWLFIT…YAWIGARLVK (426 aa). Fe cation contacts are provided by His-382, His-476, and His-480.

In the N-terminal section; belongs to the methyltransferase superfamily. EgtD family. It in the C-terminal section; belongs to the EgtB family. It depends on Fe(2+) as a cofactor.

Its subcellular location is the cytoplasm. It localises to the nucleus. It catalyses the reaction L-histidine + 3 S-adenosyl-L-methionine = hercynine + 3 S-adenosyl-L-homocysteine + 3 H(+). It carries out the reaction hercynine + L-cysteine + O2 = S-(hercyn-2-yl)-L-cysteine S-oxide + H2O. The protein operates within amino-acid biosynthesis; ergothioneine biosynthesis. In terms of biological role, catalyzes the SAM-dependent triple methylation of the alpha-amino group of histidine to form hercynine and subsequent conjugation with cysteine and oxygen to form hercynylcysteine sulfoxide, the first two steps in the biosynthesis pathway of ergothioneine. May play a role in meiosis. The polypeptide is Ergothioneine biosynthesis protein 1 (Schizosaccharomyces pombe (strain 972 / ATCC 24843) (Fission yeast)).